The following is a 403-amino-acid chain: Probable eukaryotic initiation factor 4A (403 aa).

A disordered region spans residues 1-29 (MSQQDRVAPQDQDSFLDDQPGVRPIPSFD). The Q motif signature appears at 26–54 (PSFDDMPLHQNLLRGIYSYGFEKPSSIQQ). Residues 57–230 (IAPFTRGGDI…KKFMRDPVRI (174 aa)) form the Helicase ATP-binding domain. An ATP-binding site is contributed by 70-77 (AQSGTGKT). The short motif at 178 to 181 (DEAD) is the DEAD box element. A Helicase C-terminal domain is found at 241-401 (GIKQFFIAVE…ELPVDFAAYL (161 aa)).

This sequence belongs to the DEAD box helicase family. eIF4A subfamily. In terms of assembly, eIF4F is a multi-subunit complex, the composition of which varies with external and internal environmental conditions. It is composed of at least EIF4A, EIF4E and EIF4G.

The enzyme catalyses ATP + H2O = ADP + phosphate + H(+). Its function is as follows. ATP-dependent RNA helicase which is a subunit of the eIF4F complex involved in cap recognition and is required for mRNA binding to ribosome. In the current model of translation initiation, eIF4A unwinds RNA secondary structures in the 5'-UTR of mRNAs which is necessary to allow efficient binding of the small ribosomal subunit, and subsequent scanning for the initiator codon. The chain is Probable eukaryotic initiation factor 4A from Leishmania braziliensis.